The chain runs to 228 residues: MAELNDYSTMIDILLSDMDLETVTTKKVRMALKEVYAIDVESQGKAINKLIRKHLDLVKERPRFERSLEDLLKENATLAIELTKEITVSKRSSGEEKNDSETKGTHVEKKKGTVSKSPISTRKVTLSKSLASLLGEHELTRTEVVRRLWAYIKAHNLQNPNNKKEILCDEKLELILGKSTNMFEMHKILASHMTEPKKISDCPPLIQEVRRKEKPIVSDSEQSDTKGI.

The region spanning 1 to 56 (MAELNDYSTMIDILLSDMDLETVTTKKVRMALKEVYAIDVESQGKAINKLIRKHLD) is the DEK-C domain. The span at 89-111 (SKRSSGEEKNDSETKGTHVEKKK) shows a compositional bias: basic and acidic residues. The segment at 89-118 (SKRSSGEEKNDSETKGTHVEKKKGTVSKSP) is disordered. The SWIB/MDM2 domain maps to 119–195 (ISTRKVTLSK…HKILASHMTE (77 aa)). Positions 209–228 (VRRKEKPIVSDSEQSDTKGI) are disordered. Serine 218, serine 220, and serine 223 each carry phosphoserine.

As to quaternary structure, component of the UAF (upstream activation factor) complex which consists of UAF30, RRN5, RRN9, RRN10, and histones H3 and H4.

The protein localises to the nucleus. The protein resides in the nucleolus. Its function is as follows. Nonessential component of the UAF (upstream activation factor) complex which interacts with the upstream element of the RNA polymerase I promoter and forms a stable preinitiation complex. Together with SPT15/TBP UAF seems to stimulate basal transcription to a fully activated level. UAF30 seems to play a role in silencing transcription by RNA polymerase II. In Saccharomyces cerevisiae (strain ATCC 204508 / S288c) (Baker's yeast), this protein is Upstream activation factor subunit UAF30 (UAF30).